Reading from the N-terminus, the 193-residue chain is 3-isopropylmalate dehydratase small subunit (193 aa).

Belongs to the LeuD family. LeuD type 1 subfamily. As to quaternary structure, heterodimer of LeuC and LeuD.

The catalysed reaction is (2R,3S)-3-isopropylmalate = (2S)-2-isopropylmalate. It functions in the pathway amino-acid biosynthesis; L-leucine biosynthesis; L-leucine from 3-methyl-2-oxobutanoate: step 2/4. Its function is as follows. Catalyzes the isomerization between 2-isopropylmalate and 3-isopropylmalate, via the formation of 2-isopropylmaleate. In Bacillus cereus (strain ATCC 10987 / NRS 248), this protein is 3-isopropylmalate dehydratase small subunit.